The following is a 222-amino-acid chain: Phosphoribosylformylglycinamidine synthase subunit PurQ (222 aa).

Residues 2-222 enclose the Glutamine amidotransferase type-1 domain; it reads RTAVIQFPGS…FESLKGALVQ (221 aa). The Nucleophile role is filled by Cys87. Catalysis depends on residues His195 and Glu197.

In terms of assembly, part of the FGAM synthase complex composed of 1 PurL, 1 PurQ and 2 PurS subunits.

The protein localises to the cytoplasm. It carries out the reaction N(2)-formyl-N(1)-(5-phospho-beta-D-ribosyl)glycinamide + L-glutamine + ATP + H2O = 2-formamido-N(1)-(5-O-phospho-beta-D-ribosyl)acetamidine + L-glutamate + ADP + phosphate + H(+). It catalyses the reaction L-glutamine + H2O = L-glutamate + NH4(+). Its pathway is purine metabolism; IMP biosynthesis via de novo pathway; 5-amino-1-(5-phospho-D-ribosyl)imidazole from N(2)-formyl-N(1)-(5-phospho-D-ribosyl)glycinamide: step 1/2. Part of the phosphoribosylformylglycinamidine synthase complex involved in the purines biosynthetic pathway. Catalyzes the ATP-dependent conversion of formylglycinamide ribonucleotide (FGAR) and glutamine to yield formylglycinamidine ribonucleotide (FGAM) and glutamate. The FGAM synthase complex is composed of three subunits. PurQ produces an ammonia molecule by converting glutamine to glutamate. PurL transfers the ammonia molecule to FGAR to form FGAM in an ATP-dependent manner. PurS interacts with PurQ and PurL and is thought to assist in the transfer of the ammonia molecule from PurQ to PurL. The chain is Phosphoribosylformylglycinamidine synthase subunit PurQ from Deinococcus geothermalis (strain DSM 11300 / CIP 105573 / AG-3a).